The chain runs to 285 residues: Diphthine methyl ester synthase (285 aa).

S-adenosyl-L-methionine contacts are provided by residues Leu-9, Asp-84, Gly-87, 112-113 (SI), Leu-163, Val-221, and His-246.

Belongs to the diphthine synthase family.

The protein localises to the cytoplasm. The enzyme catalyses 2-[(3S)-amino-3-carboxypropyl]-L-histidyl-[translation elongation factor 2] + 4 S-adenosyl-L-methionine = diphthine methyl ester-[translation elongation factor 2] + 4 S-adenosyl-L-homocysteine + 3 H(+). It participates in protein modification; peptidyl-diphthamide biosynthesis. S-adenosyl-L-methionine-dependent methyltransferase that catalyzes four methylations of the modified target histidine residue in translation elongation factor 2 (EF-2), to form an intermediate called diphthine methyl ester. The four successive methylation reactions represent the second step of diphthamide biosynthesis. This is Diphthine methyl ester synthase (dph5) from Emericella nidulans (strain FGSC A4 / ATCC 38163 / CBS 112.46 / NRRL 194 / M139) (Aspergillus nidulans).